The sequence spans 633 residues: Putative oligopeptide transporter HI_0561 (633 aa).

The next 15 membrane-spanning stretches (helical) occupy residues 8–28 (GVTF…LKFF), 45–65 (SAGT…MGYW), 70–90 (FWQT…FTIP), 128–148 (IAYG…LRVM), 180–200 (IGIV…GVAV), 230–250 (IGVG…MKPM), 281–301 (MIYI…HFIA), 311–331 (ILLV…VAAA), 345–365 (PISG…VSIG), 379–399 (FLTA…CISN), 420–440 (VALI…LEIL), 483–503 (WTYI…DAFL), 515–535 (VIAV…VIVG), 564–584 (LFSA…AFII), and 604–624 (WDTI…VIFA).

This sequence belongs to the oligopeptide OPT transporter family.

It is found in the cell membrane. The sequence is that of Putative oligopeptide transporter HI_0561 from Haemophilus influenzae (strain ATCC 51907 / DSM 11121 / KW20 / Rd).